A 586-amino-acid chain; its full sequence is Major facilitator superfamily domain-containing protein 6-like (586 aa).

Helical transmembrane passes span 50–70 (ILMG…AFLA) and 78–98 (MFLT…VLVP). Residues 218–237 (GPVNLSKPQGDTQTPDHSSK) form a disordered region. Over residues 223 to 237 (SKPQGDTQTPDHSSK) the composition is skewed to polar residues. 9 helical membrane-spanning segments follow: residues 240-260 (PWTF…AAPL), 284-304 (LWVW…ALVG), 318-338 (VIYF…STAF), 365-385 (LILL…VQDF), 397-417 (ELVM…FHPF), 428-448 (VGVL…YAFI), 454-474 (VLPV…AVGA), 494-514 (GHFY…VVLH), and 519-538 (VLYE…FLSI).

It belongs to the major facilitator superfamily. MFSD6 family.

It localises to the membrane. In Mus musculus (Mouse), this protein is Major facilitator superfamily domain-containing protein 6-like (Mfsd6l).